Here is a 234-residue protein sequence, read N- to C-terminus: tRNA (guanine-N(1)-)-methyltransferase (234 aa).

Residues glycine 115 and valine 135–leucine 140 each bind S-adenosyl-L-methionine.

This sequence belongs to the RNA methyltransferase TrmD family. Homodimer.

It localises to the cytoplasm. The catalysed reaction is guanosine(37) in tRNA + S-adenosyl-L-methionine = N(1)-methylguanosine(37) in tRNA + S-adenosyl-L-homocysteine + H(+). In terms of biological role, specifically methylates guanosine-37 in various tRNAs. This is tRNA (guanine-N(1)-)-methyltransferase from Rickettsia akari (strain Hartford).